A 173-amino-acid polypeptide reads, in one-letter code: Shikimate kinase 1 (173 aa).

14–19 (GAGKST) contributes to the ATP binding site. Ser-18 is a Mg(2+) binding site. Substrate is bound by residues Asp-36, Arg-60, and Gly-82. Arg-120 contacts ATP. Arg-140 contributes to the substrate binding site. Gln-157 contacts ATP.

This sequence belongs to the shikimate kinase family. As to quaternary structure, monomer. Requires Mg(2+) as cofactor.

It localises to the cytoplasm. It carries out the reaction shikimate + ATP = 3-phosphoshikimate + ADP + H(+). It participates in metabolic intermediate biosynthesis; chorismate biosynthesis; chorismate from D-erythrose 4-phosphate and phosphoenolpyruvate: step 5/7. Catalyzes the specific phosphorylation of the 3-hydroxyl group of shikimic acid using ATP as a cosubstrate. This Pectobacterium atrosepticum (strain SCRI 1043 / ATCC BAA-672) (Erwinia carotovora subsp. atroseptica) protein is Shikimate kinase 1.